Reading from the N-terminus, the 664-residue chain is Intraflagellar transport protein 70B (664 aa).

TPR repeat units follow at residues 11–44, 45–78, 153–186, 188–220, 385–418, 423–456, and 458–491; these read DGEFTAVVYRLIRDSRYSEAVQLLSAELQGSPRS, RAGLSLLAYCYYRLQEFELAAECYEQLSQMHPEL, YDGQINLGCLLYKEGHYEAACSKFLAALQASGYQ, DISYNLALAYYSSRQYAPALKHIADIIERGIRQ, LTEQLRRLTIQVQDARHSRDDESAKKAVNDYDET, IPVLMAQAKIYWNLENYPMVEKIFRKSVEFCNDH, and VWKLNVAHVLFMQENKYKEAIGFYEPIVKKNYDN. Residues 507–534 are a coiled coil; that stretch reads YIMTSQNEEAEELMRKIEKEEEQLSYDD. Residues 543 to 576 form a TPR 8 repeat; the sequence is CIVNLVIGTLYCAKGNYDFGISRVIKSLEPYHKK.

The protein belongs to the TTC30/dfy-1/fleer family. Interacts with the IFT B complex components IFT27, IFT46, IFT74, IFT52, IFT57, IFT80, IFT81 and IFT88. Interacts with KIF17.

The protein localises to the cell projection. It is found in the cilium. In terms of biological role, required for polyglutamylation of axonemal tubulin. Plays a role in anterograde intraflagellar transport (IFT), the process by which cilia precursors are transported from the base of the cilium to the site of their incorporation at the tip. The sequence is that of Intraflagellar transport protein 70B (Ift70b) from Rattus norvegicus (Rat).